Reading from the N-terminus, the 122-residue chain is Double-headed protease inhibitor, submandibular gland (122 aa).

Kazal-like domains follow at residues 10-70 (GGRK…KCDI) and 71-121 (ECPQ…QCQS). 6 cysteine pairs are disulfide-bonded: Cys16–Cys50, Cys28–Cys47, Cys36–Cys68, Cys72–Cys101, Cys79–Cys98, and Cys87–Cys119.

It localises to the secreted. Functionally, this inhibitor is composed of two homologous actively inhibiting halves: one which inhibits trypsin, the other which inhibits elastase. In Mustela lutreola (European mink), this protein is Double-headed protease inhibitor, submandibular gland.